The chain runs to 146 residues: Hemoglobin A/D subunit beta (146 aa).

In terms of domain architecture, Globin spans 2-146; the sequence is HWTSEEKQYI…VAHALALGYH (145 aa). 2 residues coordinate heme b: histidine 63 and histidine 92.

It belongs to the globin family. As to quaternary structure, hemoglobins A and D are heterotetramers of alpha-1, alpha-2 and two identical beta chains. In terms of tissue distribution, red blood cells.

Functionally, involved in oxygen transport from the lung to the various peripheral tissues. This chain is Hemoglobin A/D subunit beta, found in Aldabrachelys gigantea (Aldabra giant tortoise).